Here is a 267-residue protein sequence, read N- to C-terminus: Eukaryotic translation initiation factor 3 subunit J (267 aa).

A disordered region spans residues 1-70; that stretch reads MSWNDDDVFA…KDKKSSTDQV (70 aa). A compositionally biased stretch (acidic residues) spans 24-38; sequence WDAEEPIMESWDAEE. Positions 39–66 are enriched in basic and acidic residues; sequence TPAKKETSPKPDSKKNAKKDSKKDKKSS. Residues 192 to 220 are a coiled coil; it reads IESIRQSIATLNVLMKDKEREERRARLAK.

Belongs to the eIF-3 subunit J family. As to quaternary structure, component of the eukaryotic translation initiation factor 3 (eIF-3) complex.

It localises to the cytoplasm. Its function is as follows. Component of the eukaryotic translation initiation factor 3 (eIF-3) complex, which is involved in protein synthesis of a specialized repertoire of mRNAs and, together with other initiation factors, stimulates binding of mRNA and methionyl-tRNAi to the 40S ribosome. The eIF-3 complex specifically targets and initiates translation of a subset of mRNAs involved in cell proliferation. The sequence is that of Eukaryotic translation initiation factor 3 subunit J from Vanderwaltozyma polyspora (strain ATCC 22028 / DSM 70294 / BCRC 21397 / CBS 2163 / NBRC 10782 / NRRL Y-8283 / UCD 57-17) (Kluyveromyces polysporus).